Reading from the N-terminus, the 431-residue chain is Cortical fragment-lytic enzyme (431 aa).

LysM domains lie at 2-46 (QIYV…TIVI) and 51-95 (QFYD…RLYI). The region spanning 103 to 431 (IESNAYLEPR…QFNVVKKTFR (329 aa)) is the GH18 domain. Chitin-binding positions include 148–149 (VA) and 174–177 (ENQA). Residue Glu217 is the Proton donor of the active site. Residues Tyr218, 280 to 283 (MTYE), and Trp406 contribute to the chitin site.

The protein belongs to the glycosyl hydrolase 18 family. Chitinase class II subfamily.

It is found in the spore coat. Functionally, N-acetylglucosaminidase involved in cortex peptidoglycan degradation during germination. Cleaves only partially degraded spore peptidoglycans. Recognizes muramic acid delta-lactam residues specific to spore peptidoglycans. The polypeptide is Cortical fragment-lytic enzyme (Bacillus subtilis (strain 168)).